Consider the following 53-residue polypeptide: Small ribosomal subunit protein uS14 (53 aa).

Residues C17, C20, C36, and C39 each coordinate Zn(2+).

This sequence belongs to the universal ribosomal protein uS14 family. Zinc-binding uS14 subfamily. In terms of assembly, part of the 30S ribosomal subunit. Requires Zn(2+) as cofactor.

Binds 16S rRNA, required for the assembly of 30S particles. The chain is Small ribosomal subunit protein uS14 from Methanococcus maripaludis (strain DSM 14266 / JCM 13030 / NBRC 101832 / S2 / LL).